The following is a 577-amino-acid chain: Protein NRT1/ PTR FAMILY 6.2 (577 aa).

The next 12 membrane-spanning stretches (helical) occupy residues 28 to 48, 74 to 94, 96 to 116, 134 to 154, 183 to 203, 214 to 234, 332 to 352, 369 to 389, 409 to 429, 447 to 467, 488 to 508, and 535 to 555; these read WITA…TMGI, FMGT…SFLG, FKTI…LAVA, IPAT…IALG, FFFN…VTVL, WAYG…LCGT, LLPI…MITF, IPAG…LAVY, LQRI…AALV, ISVF…AFIY, GLFL…VSIV, and WLLV…ALWF.

This sequence belongs to the major facilitator superfamily. Proton-dependent oligopeptide transporter (POT/PTR) (TC 2.A.17) family. As to expression, expressed in shoots, leaves, flowers and siliques. Expressed in leaf petiole.

It localises to the membrane. Functionally, low-affinity proton-dependent nitrate transporter. Not involved in dipeptides transport. In Arabidopsis thaliana (Mouse-ear cress), this protein is Protein NRT1/ PTR FAMILY 6.2 (NPF6.2).